A 426-amino-acid chain; its full sequence is 26S proteasome regulatory subunit 7B (426 aa).

Residue 209-216 (GPPGTGKT) coordinates ATP.

Belongs to the AAA ATPase family.

It is found in the cytoplasm. It localises to the nucleus. The 26S proteasome is involved in the ATP-dependent degradation of ubiquitinated proteins. The regulatory (or ATPase) complex confers ATP dependency and substrate specificity to the 26S complex. This Oryza sativa subsp. japonica (Rice) protein is 26S proteasome regulatory subunit 7B (RPT1B).